Consider the following 422-residue polypeptide: Enolase (422 aa).

A (2R)-2-phosphoglycerate-binding site is contributed by Gln163. Catalysis depends on Glu205, which acts as the Proton donor. Mg(2+)-binding residues include Asp242, Glu283, and Asp310. Residues Lys335, Arg364, Ser365, and Lys386 each coordinate (2R)-2-phosphoglycerate. Residue Lys335 is the Proton acceptor of the active site.

Belongs to the enolase family. It depends on Mg(2+) as a cofactor.

It is found in the cytoplasm. The protein localises to the secreted. It localises to the cell surface. It catalyses the reaction (2R)-2-phosphoglycerate = phosphoenolpyruvate + H2O. Its pathway is carbohydrate degradation; glycolysis; pyruvate from D-glyceraldehyde 3-phosphate: step 4/5. In terms of biological role, catalyzes the reversible conversion of 2-phosphoglycerate (2-PG) into phosphoenolpyruvate (PEP). It is essential for the degradation of carbohydrates via glycolysis. The protein is Enolase of Bdellovibrio bacteriovorus (strain ATCC 15356 / DSM 50701 / NCIMB 9529 / HD100).